The sequence spans 122 residues: Small ribosomal subunit protein uS13 (122 aa).

The segment at 98–122 is disordered; sequence VRGQKTKSNARTRKGPRPSRIKKKK. The segment covering 101-122 has biased composition (basic residues); that stretch reads QKTKSNARTRKGPRPSRIKKKK.

The protein belongs to the universal ribosomal protein uS13 family. Part of the 30S ribosomal subunit. Forms a loose heterodimer with protein S19. Forms two bridges to the 50S subunit in the 70S ribosome.

Located at the top of the head of the 30S subunit, it contacts several helices of the 16S rRNA. In the 70S ribosome it contacts the 23S rRNA (bridge B1a) and protein L5 of the 50S subunit (bridge B1b), connecting the 2 subunits; these bridges are implicated in subunit movement. Contacts the tRNAs in the A and P-sites. The polypeptide is Small ribosomal subunit protein uS13 (Thermosipho africanus (strain TCF52B)).